Reading from the N-terminus, the 175-residue chain is Crossover junction endodeoxyribonuclease RuvC (175 aa).

Residues Asp-11, Glu-71, and His-143 contribute to the active site. Asp-11, Glu-71, and His-143 together coordinate Mg(2+).

Belongs to the RuvC family. As to quaternary structure, homodimer which binds Holliday junction (HJ) DNA. The HJ becomes 2-fold symmetrical on binding to RuvC with unstacked arms; it has a different conformation from HJ DNA in complex with RuvA. In the full resolvosome a probable DNA-RuvA(4)-RuvB(12)-RuvC(2) complex forms which resolves the HJ. Mg(2+) is required as a cofactor.

The protein resides in the cytoplasm. The enzyme catalyses Endonucleolytic cleavage at a junction such as a reciprocal single-stranded crossover between two homologous DNA duplexes (Holliday junction).. The RuvA-RuvB-RuvC complex processes Holliday junction (HJ) DNA during genetic recombination and DNA repair. Endonuclease that resolves HJ intermediates. Cleaves cruciform DNA by making single-stranded nicks across the HJ at symmetrical positions within the homologous arms, yielding a 5'-phosphate and a 3'-hydroxyl group; requires a central core of homology in the junction. The consensus cleavage sequence is 5'-(A/T)TT(C/G)-3'. Cleavage occurs on the 3'-side of the TT dinucleotide at the point of strand exchange. HJ branch migration catalyzed by RuvA-RuvB allows RuvC to scan DNA until it finds its consensus sequence, where it cleaves and resolves the cruciform DNA. This is Crossover junction endodeoxyribonuclease RuvC from Parvibaculum lavamentivorans (strain DS-1 / DSM 13023 / NCIMB 13966).